A 156-amino-acid polypeptide reads, in one-letter code: Low molecular weight phosphotyrosine protein phosphatase (156 aa).

The Nucleophile role is filled by cysteine 11. Arginine 17 is a catalytic residue. The Proton donor role is filled by aspartate 128.

The protein belongs to the low molecular weight phosphotyrosine protein phosphatase family.

It is found in the cytoplasm. The catalysed reaction is O-phospho-L-tyrosyl-[protein] + H2O = L-tyrosyl-[protein] + phosphate. It carries out the reaction a phosphate monoester + H2O = an alcohol + phosphate. In terms of biological role, may contribute to dephosphorylation of 'Tyr-15' of cdc2. The polypeptide is Low molecular weight phosphotyrosine protein phosphatase (stp1) (Schizosaccharomyces pombe (strain 972 / ATCC 24843) (Fission yeast)).